The chain runs to 499 residues: Aspartyl/glutamyl-tRNA(Asn/Gln) amidotransferase subunit B (499 aa).

It belongs to the GatB/GatE family. GatB subfamily. As to quaternary structure, heterotrimer of A, B and C subunits.

It catalyses the reaction L-glutamyl-tRNA(Gln) + L-glutamine + ATP + H2O = L-glutaminyl-tRNA(Gln) + L-glutamate + ADP + phosphate + H(+). The enzyme catalyses L-aspartyl-tRNA(Asn) + L-glutamine + ATP + H2O = L-asparaginyl-tRNA(Asn) + L-glutamate + ADP + phosphate + 2 H(+). Functionally, allows the formation of correctly charged Asn-tRNA(Asn) or Gln-tRNA(Gln) through the transamidation of misacylated Asp-tRNA(Asn) or Glu-tRNA(Gln) in organisms which lack either or both of asparaginyl-tRNA or glutaminyl-tRNA synthetases. The reaction takes place in the presence of glutamine and ATP through an activated phospho-Asp-tRNA(Asn) or phospho-Glu-tRNA(Gln). In Mesorhizobium japonicum (strain LMG 29417 / CECT 9101 / MAFF 303099) (Mesorhizobium loti (strain MAFF 303099)), this protein is Aspartyl/glutamyl-tRNA(Asn/Gln) amidotransferase subunit B.